The following is a 422-amino-acid chain: Serine protease HTRA2, mitochondrial (422 aa).

The transit peptide at 1 to 17 directs the protein to the mitochondrion; sequence MALRGSHRLEVIFKRCI. Residues 18–74 constitute a propeptide that is removed on maturation; that stretch reads ASPVFHSHAANRRSSQLAIKGTDPSSNGNSGQDQQNGEQKAKGWRRLVRFFVPFSLG. The span at 29–55 shows a compositional bias: polar residues; it reads RRSSQLAIKGTDPSSNGNSGQDQQNGE. The tract at residues 29-56 is disordered; the sequence is RRSSQLAIKGTDPSSNGNSGQDQQNGEQ. A helical membrane pass occupies residues 64–82; sequence LVRFFVPFSLGAAVSAAVI. 2 consecutive short sequence motifs (IAP-binding) follow at residues 75–78 and 94–97; these read AAVS and SKMT. The segment at 139–302 is serine protease; the sequence is SNGSGFIIEQ…IPIDYVKVFL (164 aa). Residues H157, D189, and S266 each act as charge relay system in the active site. The region spanning 325-410 is the PDZ domain; sequence MGITMLTLTP…NLDIVILRGV (86 aa).

This sequence belongs to the peptidase S1C family. In terms of assembly, interacts with th/DIAP1 (via BIR 2 domain).

The protein resides in the mitochondrion intermembrane space. Its subcellular location is the mitochondrion membrane. The catalysed reaction is Cleavage of non-polar aliphatic amino-acids at the P1 position, with a preference for Val, Ile and Met. At the P2 and P3 positions, Arg is selected most strongly with a secondary preference for other hydrophilic residues.. Its function is as follows. Serine protease that shows proteolytic activity against a non-specific substrate beta-casein. Promotes or induces cell death either by direct binding to and inhibition of BIRC proteins (also called inhibitor of apoptosis proteins, IAPs), leading to an increase in caspase activity, or by a BIRC inhibition-independent, caspase-independent and serine protease activity-dependent mechanism. Can antagonize antiapoptotic activity of th/Diap1 by directly inducing the degradation of th/Diap1. The chain is Serine protease HTRA2, mitochondrial from Drosophila yakuba (Fruit fly).